A 484-amino-acid polypeptide reads, in one-letter code: Replication factor C large subunit (484 aa).

Position 46 to 53 (46 to 53 (GPPGSGKT)) interacts with ATP. Residues 463-478 (NADTKEKEKKDPKKQA) show a composition bias toward basic and acidic residues. The interval 463 to 484 (NADTKEKEKKDPKKQATLDSFF) is disordered.

This sequence belongs to the activator 1 small subunits family. RfcL subfamily. As to quaternary structure, heteromultimer composed of small subunits (RfcS) and large subunits (RfcL).

Part of the RFC clamp loader complex which loads the PCNA sliding clamp onto DNA. The protein is Replication factor C large subunit of Methanococcus maripaludis (strain C6 / ATCC BAA-1332).